Consider the following 225-residue polypeptide: 7-cyano-7-deazaguanine synthase (225 aa).

Valine 8–leucine 18 serves as a coordination point for ATP. Zn(2+)-binding residues include cysteine 188, cysteine 198, cysteine 201, and cysteine 204.

This sequence belongs to the QueC family. It depends on Zn(2+) as a cofactor.

The catalysed reaction is 7-carboxy-7-deazaguanine + NH4(+) + ATP = 7-cyano-7-deazaguanine + ADP + phosphate + H2O + H(+). The protein operates within purine metabolism; 7-cyano-7-deazaguanine biosynthesis. Catalyzes the ATP-dependent conversion of 7-carboxy-7-deazaguanine (CDG) to 7-cyano-7-deazaguanine (preQ(0)). This is 7-cyano-7-deazaguanine synthase from Rickettsia bellii (strain OSU 85-389).